Reading from the N-terminus, the 168-residue chain is Quinol oxidase subunit 2 (168 aa).

The chain crosses the membrane as a helical span at residues glutamate 9–serine 31.

It belongs to the cytochrome c oxidase subunit 2 family.

Its subcellular location is the cell membrane. It catalyses the reaction 2 a quinol + O2 = 2 a quinone + 2 H2O. The terminal oxidase is the component of the respiratory chain that catalyzes the reduction of oxygen to water. Subunits 1-3 form the functional core of the enzyme complex. Functionally, subunit 2 transfers the electrons from caldariella quinol to the bimetallic center of the catalytic subunit 1 that is formed by heme A3 and Cu(B). This chain is Quinol oxidase subunit 2 (soxA), found in Sulfolobus acidocaldarius (strain ATCC 33909 / DSM 639 / JCM 8929 / NBRC 15157 / NCIMB 11770).